Here is a 214-residue protein sequence, read N- to C-terminus: Pyridoxine/pyridoxamine 5'-phosphate oxidase (214 aa).

Residues 7–10 (REEY) and Lys65 each bind substrate. Residues 60–65 (RTVLLK), 75–76 (FT), Arg81, Lys82, and Gln104 contribute to the FMN site. Residues Tyr122, Arg126, and Ser130 each coordinate substrate. Residues 139–140 (QS) and Trp184 contribute to the FMN site. Residue 190 to 192 (RLH) coordinates substrate. Arg194 provides a ligand contact to FMN.

Belongs to the pyridoxamine 5'-phosphate oxidase family. As to quaternary structure, homodimer. It depends on FMN as a cofactor.

It catalyses the reaction pyridoxamine 5'-phosphate + O2 + H2O = pyridoxal 5'-phosphate + H2O2 + NH4(+). The enzyme catalyses pyridoxine 5'-phosphate + O2 = pyridoxal 5'-phosphate + H2O2. It participates in cofactor metabolism; pyridoxal 5'-phosphate salvage; pyridoxal 5'-phosphate from pyridoxamine 5'-phosphate: step 1/1. The protein operates within cofactor metabolism; pyridoxal 5'-phosphate salvage; pyridoxal 5'-phosphate from pyridoxine 5'-phosphate: step 1/1. Catalyzes the oxidation of either pyridoxine 5'-phosphate (PNP) or pyridoxamine 5'-phosphate (PMP) into pyridoxal 5'-phosphate (PLP). This chain is Pyridoxine/pyridoxamine 5'-phosphate oxidase, found in Crocosphaera subtropica (strain ATCC 51142 / BH68) (Cyanothece sp. (strain ATCC 51142)).